Reading from the N-terminus, the 52-residue chain is Large ribosomal subunit protein bL33 (52 aa).

It belongs to the bacterial ribosomal protein bL33 family.

The chain is Large ribosomal subunit protein bL33 from Chlamydia abortus (strain DSM 27085 / S26/3) (Chlamydophila abortus).